Consider the following 550-residue polypeptide: Dr1-associated corepressor homolog (550 aa).

Residues Thr-7 to Ile-71 form the Histone-fold domain. The span at Asp-89–Gly-103 shows a compositional bias: basic and acidic residues. 3 disordered regions span residues Asp-89–Phe-355, Ser-378–Asn-444, and Phe-461–Phe-512. The segment covering Glu-104–Glu-140 has biased composition (acidic residues). Residues Gly-148–Gly-164 show a composition bias toward gly residues. Over residues Thr-182–Pro-193 the composition is skewed to low complexity. The segment covering Asn-200–Thr-224 has biased composition (polar residues). Low complexity-rich tracts occupy residues Ser-225–Ser-238, Asn-245–Asn-350, and Leu-382–Asn-422.

It belongs to the NC2 alpha/DRAP1 family.

The protein localises to the nucleus. Involved in transcriptional regulation. Component of the NC2 complex which represses RNA polymerase II transcription through binding to tbp and thereby inhibiting the assembly of the preinitiation complex. In Dictyostelium discoideum (Social amoeba), this protein is Dr1-associated corepressor homolog (drap1).